Reading from the N-terminus, the 499-residue chain is Maturase K (499 aa).

Belongs to the intron maturase 2 family. MatK subfamily.

It localises to the plastid. It is found in the chloroplast. Usually encoded in the trnK tRNA gene intron. Probably assists in splicing its own and other chloroplast group II introns. The polypeptide is Maturase K (Ceratonia siliqua (Carob)).